A 221-amino-acid chain; its full sequence is PKHD-type hydroxylase PMN2A_0775 (221 aa).

The Fe2OG dioxygenase domain maps to 80 to 174 (LIHGVMFTQS…RHVCVGWIQS (95 aa)). Fe cation-binding residues include H98, D100, and H155. R165 contacts 2-oxoglutarate.

Fe(2+) is required as a cofactor. It depends on L-ascorbate as a cofactor.

In Prochlorococcus marinus (strain NATL2A), this protein is PKHD-type hydroxylase PMN2A_0775.